The sequence spans 204 residues: High frequency lysogenization protein HflD homolog (204 aa).

It belongs to the HflD family.

The protein localises to the cytoplasm. It localises to the cell inner membrane. This chain is High frequency lysogenization protein HflD homolog, found in Xanthomonas euvesicatoria pv. vesicatoria (strain 85-10) (Xanthomonas campestris pv. vesicatoria).